We begin with the raw amino-acid sequence, 228 residues long: MKPTRPFHQTPVITIDGPSASGKGTVAALVAASLGFHLLDSGALYRLAALASLRYTIEAHDVDALVKLIDDLHITFREGLAQLDGVDVSAEIRAEEVGSRASAIAVHAPVRAALVARQRAFRKEPGLVADGRDMGTVIFQDAVLKVFMTASVEARAARRHKQLIQKGFSANIDDLLRDLRERDERDSQRVAAPLKPAADAKLLDTSALSVDQAVEQVVQWYEALVPHA.

17-25 lines the ATP pocket; it reads GPSASGKGT.

Belongs to the cytidylate kinase family. Type 1 subfamily.

It is found in the cytoplasm. It carries out the reaction CMP + ATP = CDP + ADP. The enzyme catalyses dCMP + ATP = dCDP + ADP. This chain is Cytidylate kinase, found in Paraburkholderia xenovorans (strain LB400).